Consider the following 579-residue polypeptide: Glycine--tRNA ligase (579 aa).

Glu-175 serves as a coordination point for glycine. Residues 207 to 209 (RNE) and 218 to 219 (RV) each bind ATP. Glu-226 provides a ligand contact to glycine. 327–328 (EC) contributes to the ATP binding site. 442-444 (EPS) lines the glycine pocket. An ATP-binding site is contributed by Arg-449.

The protein belongs to the class-II aminoacyl-tRNA synthetase family. In terms of assembly, homodimer.

It carries out the reaction tRNA(Gly) + glycine + ATP = glycyl-tRNA(Gly) + AMP + diphosphate. The enzyme catalyses 2 ATP + H(+) = P(1),P(4)-bis(5'-adenosyl) tetraphosphate + diphosphate. Functionally, catalyzes the ATP-dependent ligation of glycine to the 3'-end of its cognate tRNA, via the formation of an aminoacyl-adenylate intermediate (Gly-AMP). Also produces diadenosine tetraphosphate (Ap4A), a universal pleiotropic signaling molecule needed for cell regulation pathways, by direct condensation of 2 ATPs. Thereby, may play a special role in Ap4A homeostasis. The sequence is that of Glycine--tRNA ligase from Encephalitozoon cuniculi (strain GB-M1) (Microsporidian parasite).